Here is a 152-residue protein sequence, read N- to C-terminus: Large ribosomal subunit protein uL22 (152 aa).

The protein belongs to the universal ribosomal protein uL22 family. As to quaternary structure, part of the 50S ribosomal subunit.

Its function is as follows. This protein binds specifically to 23S rRNA. It makes multiple contacts with different domains of the 23S rRNA in the assembled 50S subunit and ribosome. In terms of biological role, the globular domain of the protein is located near the polypeptide exit tunnel on the outside of the subunit, while an extended beta-hairpin is found that lines the wall of the exit tunnel in the center of the 70S ribosome. The polypeptide is Large ribosomal subunit protein uL22 (Methanothrix thermoacetophila (strain DSM 6194 / JCM 14653 / NBRC 101360 / PT) (Methanosaeta thermophila)).